Here is a 211-residue protein sequence, read N- to C-terminus: Peptide methionine sulfoxide reductase MsrA (211 aa).

Cysteine 52 is an active-site residue.

Belongs to the MsrA Met sulfoxide reductase family.

The enzyme catalyses L-methionyl-[protein] + [thioredoxin]-disulfide + H2O = L-methionyl-(S)-S-oxide-[protein] + [thioredoxin]-dithiol. The catalysed reaction is [thioredoxin]-disulfide + L-methionine + H2O = L-methionine (S)-S-oxide + [thioredoxin]-dithiol. Its function is as follows. Has an important function as a repair enzyme for proteins that have been inactivated by oxidation. Catalyzes the reversible oxidation-reduction of methionine sulfoxide in proteins to methionine. The sequence is that of Peptide methionine sulfoxide reductase MsrA from Klebsiella pneumoniae (strain 342).